The sequence spans 464 residues: Rhodopsin (464 aa).

Topologically, residues 1–33 are extracellular; that stretch reads MGRDIPDNETWWYNPTMEVHPHWKQFNQVPDAV. A glycan (N-linked (GlcNAc...) asparagine) is linked at Asn8. A helical transmembrane segment spans residues 34-58; that stretch reads YYSLGIFIGICGIIGCTGNGIVIYL. Residues 59-70 are Cytoplasmic-facing; that stretch reads FTKTKSLQTPAN. Residues 71-97 traverse the membrane as a helical segment; that stretch reads MFIINLAFSDFTFSLVNGFPLMTISCF. At 98–109 the chain is on the extracellular side; it reads IKKWVFGMAACK. A disulfide bridge links Cys108 with Cys186. The chain crosses the membrane as a helical span at residues 110–131; that stretch reads VYGFIGGIFGLMSIMTMSMISI. Residues 132-134 carry the 'Ionic lock' involved in activated form stabilization motif; it reads DRY. At 132–151 the chain is on the cytoplasmic side; sequence DRYNVIGRPMAASKKMSHRR. The chain crosses the membrane as a helical span at residues 152–172; sequence AFLMIIFVWMWSTLWSIGPIF. Topologically, residues 173 to 199 are extracellular; sequence GWGAYVLEGVLCNCSFDYITRDSATRS. Residues 200–224 traverse the membrane as a helical segment; that stretch reads NIVCMYIFAFCFPILIIFFCYFNIV. The Cytoplasmic portion of the chain corresponds to 225-261; that stretch reads MAVSNHEKEMAAMAKRLNAKELRKAQAGASAEMKLAK. Residues 262–283 traverse the membrane as a helical segment; sequence ISIVIVTQFLLSWSPYAVVALL. Residues 284-293 are Extracellular-facing; sequence AQFGPIEWVT. The helical transmembrane segment at 294 to 315 threads the bilayer; the sequence is PYAAQLPVMFAKASAIHNPLIY. The residue at position 305 (Lys305) is an N6-(retinylidene)lysine. Residues 316-464 lie on the Cytoplasmic side of the membrane; sequence SVSHPKFREA…QGVDNQAYQA (149 aa). S-palmitoyl cysteine attachment occurs at residues Cys336 and Cys337. A disordered region spans residues 344–464; that stretch reads VEDDKDAETE…QGVDNQAYQA (121 aa). The segment covering 367 to 401 has biased composition (low complexity); sequence AAQMKEMMAMMQKMQQQQAAYPPQGAYPPQGGYPP. 2 stretches are compositionally biased toward pro residues: residues 416–425 and 434–452; these read QGYPPPPQGY and QGYP…PQAA.

Belongs to the G-protein coupled receptor 1 family. Opsin subfamily. Post-translationally, contains one covalently linked retinal chromophore. Upon light absorption, the covalently bound 11-cis-retinal is converted to all-trans-retinal. After hydrolysis of the Schiff base and release of the covalently bound all-trans-retinal, active rhodopsin is regenerated by binding of a fresh molecule of 11-cis-retinal.

It localises to the cell projection. It is found in the rhabdomere membrane. Its function is as follows. Photoreceptor required for image-forming vision at low light intensity. Light-induced isomerization of 11-cis to all-trans retinal triggers a conformational change that activates signaling via G-proteins. Signaling mediates the activation of phospholipase C. Subsequent receptor phosphorylation mediates displacement of the bound G-protein alpha subunit by arrestin and terminates signaling. This chain is Rhodopsin (RHO), found in Sepia officinalis (Common cuttlefish).